Reading from the N-terminus, the 607-residue chain is DNA mismatch repair protein MutL (607 aa).

This sequence belongs to the DNA mismatch repair MutL/HexB family.

In terms of biological role, this protein is involved in the repair of mismatches in DNA. It is required for dam-dependent methyl-directed DNA mismatch repair. May act as a 'molecular matchmaker', a protein that promotes the formation of a stable complex between two or more DNA-binding proteins in an ATP-dependent manner without itself being part of a final effector complex. This is DNA mismatch repair protein MutL from Paramagnetospirillum magneticum (strain ATCC 700264 / AMB-1) (Magnetospirillum magneticum).